We begin with the raw amino-acid sequence, 283 residues long: Elongation factor Ts (283 aa).

An involved in Mg(2+) ion dislocation from EF-Tu region spans residues 80–83; the sequence is TDFV.

This sequence belongs to the EF-Ts family.

It is found in the cytoplasm. Functionally, associates with the EF-Tu.GDP complex and induces the exchange of GDP to GTP. It remains bound to the aminoacyl-tRNA.EF-Tu.GTP complex up to the GTP hydrolysis stage on the ribosome. This Actinobacillus pleuropneumoniae serotype 5b (strain L20) protein is Elongation factor Ts.